Reading from the N-terminus, the 293-residue chain is Elongation factor Ts (293 aa).

The tract at residues T80–V83 is involved in Mg(2+) ion dislocation from EF-Tu.

It belongs to the EF-Ts family.

The protein localises to the cytoplasm. Functionally, associates with the EF-Tu.GDP complex and induces the exchange of GDP to GTP. It remains bound to the aminoacyl-tRNA.EF-Tu.GTP complex up to the GTP hydrolysis stage on the ribosome. This is Elongation factor Ts from Burkholderia cenocepacia (strain ATCC BAA-245 / DSM 16553 / LMG 16656 / NCTC 13227 / J2315 / CF5610) (Burkholderia cepacia (strain J2315)).